A 745-amino-acid chain; its full sequence is MSIELLFCKSQVYIHPTKNLQDNVSGYLLITHQSNSETITSSTISWIPENSLNEEDINFLNNAETRNINEKILRLPVSSRKLNTLLGSGSFLSSNWQFTIPVLSLYSVQFKLPNTWWYGSCILYSKSPRETESIPVLYFHDDLCPSTISKQKELNRSFDPFNNSNEMYWGGQDFKDALGSIVELKRVESEPTFWLVNATLEDLRNFSSANLKSSEEKPSSSKDDGVTKLKEDAWQKWESTKWSLMSQFADITAKTGSFVGSLIKKHPVVQLVERNKNNYYVQKMLKNPKVVEIQDDFDSAKIYLAKWALSVKEEAERYQEGSYDNPYRRILVSEFGLTGNEDVSFTEEELNRAMERNHPMTKQKWNSLFDSEGRLTVTVNEVKDYIFHGGLADDATRKEVWPFLLGVYPWDSSEDERKQLRKALHDEYMELKQKWVDREVNLDNDEEEYWKDQLFRIEKDVKRNDRNIDIYKYNTSDNLPFPEDTAPTTDDDDSIKNPNLKKLADILTTYNIFNPNLGYVQGMTDLLSPLYYIIRDEETTFWCFTNFMERMERNFLRDQSGIRDQMLALTDLCQLMLPRLSAHLQKCDSSDLFFCFRMLLVWFKREFNYDDIFNIWEVFFTDFYSSQYQLFFMLAILQKNSSPIVNNLQTFDQVIKYFNDLNSKMNWRDLMVRSELLFIQFHKTADLLARRQEQLIPENSGHDTSDIEGGTEPKTQSYISEHLQTLLSKEVIIQKENTRTKDSIK.

One can recognise a Rab-GAP TBC domain in the interval 391–623 (LADDATRKEV…NIWEVFFTDF (233 aa)).

Functionally, most effectively accelerate the intrinsic GTPase activity of YPT7. It is also active, but to a lesser extent, on YPT31, YPT32 and YPT1. YPT6 and SEC4. This chain is GTPase-activating protein GYP7 (GYP7), found in Candida glabrata (strain ATCC 2001 / BCRC 20586 / JCM 3761 / NBRC 0622 / NRRL Y-65 / CBS 138) (Yeast).